A 156-amino-acid chain; its full sequence is Endoribonuclease YbeY (156 aa).

Histidine 122, histidine 126, and histidine 132 together coordinate Zn(2+).

This sequence belongs to the endoribonuclease YbeY family. Zn(2+) is required as a cofactor.

The protein resides in the cytoplasm. Its function is as follows. Single strand-specific metallo-endoribonuclease involved in late-stage 70S ribosome quality control and in maturation of the 3' terminus of the 16S rRNA. This is Endoribonuclease YbeY from Bacillus cereus (strain B4264).